We begin with the raw amino-acid sequence, 425 residues long: MLDLKFIRKHPEAVRMALEKRGAEFDLDRLLDLDDEWRQKLFTVERLKNRRNAVSEEIARLKKAGEPAEELIAEMRNVSQQIRELDGEIRQVEENLQALLLQVPNIPHPLVPFGRADTDNEEVRRWGEPPAFGFEPRPHWELGEELNILDFARGGKVSGARFSFCRGAGARLERALICFMLDLHVDRHGYTELFPPFLVNAQSMTGTGQLPKFAADMYKVENEDYYLVPTAEVPVTNYLRDEILDGDTLPRKYAAYSACFRAEAGAAGRDTRGLIRQHQFNKVELVKFTRPEDSEDELEKLVRDAEEVLRLLRLPYRVVLLCTGDLGFSSSRTYDLEVWMPGQGVYREISSCSNFTDFQARRANIRYRAHPRAKADFVHTLNGSGLAVGRTLAAVLENFQQADGTVTVPEVLRPYMGGMERITRK.

230–232 (TAE) provides a ligand contact to L-serine. An ATP-binding site is contributed by 261–263 (RAE). Glu284 contacts L-serine. 348–351 (EISS) is a binding site for ATP. L-serine is bound at residue Ser384.

This sequence belongs to the class-II aminoacyl-tRNA synthetase family. Type-1 seryl-tRNA synthetase subfamily. Homodimer. The tRNA molecule binds across the dimer.

The protein resides in the cytoplasm. The catalysed reaction is tRNA(Ser) + L-serine + ATP = L-seryl-tRNA(Ser) + AMP + diphosphate + H(+). The enzyme catalyses tRNA(Sec) + L-serine + ATP = L-seryl-tRNA(Sec) + AMP + diphosphate + H(+). The protein operates within aminoacyl-tRNA biosynthesis; selenocysteinyl-tRNA(Sec) biosynthesis; L-seryl-tRNA(Sec) from L-serine and tRNA(Sec): step 1/1. Its function is as follows. Catalyzes the attachment of serine to tRNA(Ser). Is also able to aminoacylate tRNA(Sec) with serine, to form the misacylated tRNA L-seryl-tRNA(Sec), which will be further converted into selenocysteinyl-tRNA(Sec). This Desulforudis audaxviator (strain MP104C) protein is Serine--tRNA ligase.